The primary structure comprises 221 residues: UPF0502 protein VSAL_II0605 (221 aa).

The protein belongs to the UPF0502 family.

This Aliivibrio salmonicida (strain LFI1238) (Vibrio salmonicida (strain LFI1238)) protein is UPF0502 protein VSAL_II0605.